The chain runs to 804 residues: Zinc finger protein YGR067C (804 aa).

C2H2-type zinc fingers lie at residues 8–30 (YICSFCLKPFSRSEHKIRHERSH) and 36–59 (FQCQVCKHSFVRRDLLQRHIRTVH). Positions 782–796 (QEFSASSTDNKQSKN) are enriched in polar residues. A disordered region spans residues 782 to 804 (QEFSASSTDNKQSKNIEIFSQIK).

The protein resides in the nucleus. The sequence is that of Zinc finger protein YGR067C from Saccharomyces cerevisiae (strain ATCC 204508 / S288c) (Baker's yeast).